The primary structure comprises 317 residues: Beta-ketoacyl-[acyl-carrier-protein] synthase III (317 aa).

Catalysis depends on residues Cys-112 and His-244. The interval 245 to 249 is ACP-binding; it reads QANIR. Residue Asn-274 is part of the active site.

The protein belongs to the thiolase-like superfamily. FabH family. In terms of assembly, homodimer.

It is found in the cytoplasm. The enzyme catalyses malonyl-[ACP] + acetyl-CoA + H(+) = 3-oxobutanoyl-[ACP] + CO2 + CoA. It participates in lipid metabolism; fatty acid biosynthesis. Catalyzes the condensation reaction of fatty acid synthesis by the addition to an acyl acceptor of two carbons from malonyl-ACP. Catalyzes the first condensation reaction which initiates fatty acid synthesis and may therefore play a role in governing the total rate of fatty acid production. Possesses both acetoacetyl-ACP synthase and acetyl transacylase activities. Its substrate specificity determines the biosynthesis of branched-chain and/or straight-chain of fatty acids. The chain is Beta-ketoacyl-[acyl-carrier-protein] synthase III from Rickettsia akari (strain Hartford).